The following is a 324-amino-acid chain: Virulence-associated V antigen (324 aa).

The protein localises to the secreted. Its function is as follows. Possibly involved in calcium regulation of YOP expression, which includes the export process. This is Virulence-associated V antigen (lcrV) from Yersinia pestis (strain Pestoides F).